The sequence spans 109 residues: Oncomodulin-1 (109 aa).

Position 2 is an N-acetylserine (S2). EF-hand domains are found at residues 39 to 74 (MSAN…FESG) and 78 to 109 (LTES…MVHS). Ca(2+) contacts are provided by D52, D54, S56, Y58, E63, D91, D93, D95, K97, and E102.

Belongs to the parvalbumin family.

Functionally, has some calmodulin-like activity with respect to enzyme activation and growth regulation. Binds two calcium ions. This chain is Oncomodulin-1 (OCM), found in Homo sapiens (Human).